The chain runs to 91 residues: Large ribosomal subunit protein eL43 (91 aa).

The segment at 38–59 (CNFCGKDSLKRKAAGIWECKAC) adopts a C4-type zinc-finger fold.

The protein belongs to the eukaryotic ribosomal protein eL43 family.

In Schistosoma mansoni (Blood fluke), this protein is Large ribosomal subunit protein eL43.